Here is a 231-residue protein sequence, read N- to C-terminus: MALSQNQAKFSKGFVVMIWVLFIACAITSTEASLTKCQQLQASANSGLIGAYVPQCKETGEFEEKQCWGSTGYCWCVDEDGKEILGTKIRGSPDCSRRKAALTLCQMMQAIIVNVPGWCGPPSCKADGSFDEVQCCASNGECYCVDKKGKELEGTRQQGRPTCERHLSECEEARIKAHSNSLRVEMFVPECFEDGSYNPVQCWPSTGYCWCVDEGGVKVPGSDVRFKRPTC.

Residues 1–32 (MALSQNQAKFSKGFVVMIWVLFIACAITSTEA) form the signal peptide. Thyroglobulin type-1 domains follow at residues 34–95 (LTKC…SPDC), 102–163 (LTLC…RPTC), and 167–231 (LSEC…RPTC). Intrachain disulfides connect Cys37/Cys56, Cys67/Cys74, Cys76/Cys95, Cys105/Cys124, Cys135/Cys142, Cys144/Cys163, Cys170/Cys191, Cys202/Cys209, and Cys211/Cys231.

The protein belongs to the protease inhibitor I31 family.

It is found in the secreted. In terms of biological role, potent inhibitor of papain-like cysteine proteinases (Ki=0.18-0.57 nM on papain), as well as of the aspartic proteinase cathepsin D (Ki=0.3-05 nM). This Actinia equina (Beadlet anemone) protein is Equistatin.